Here is a 431-residue protein sequence, read N- to C-terminus: uncharacterized protein (431 aa).

Helical transmembrane passes span 228–248 (GLLSIPLTSSIIIYGFIHYLS), 279–299 (IGLPKIILYSNLATFCYNFTF), 349–369 (ILWPFVGKCTGGLLLNAFLWI), and 388–408 (MIFNIIGCGTAAIGWSSLKLY).

Its subcellular location is the membrane. This is an uncharacterized protein from Saccharomyces cerevisiae (strain ATCC 204508 / S288c) (Baker's yeast).